Here is a 179-residue protein sequence, read N- to C-terminus: uncharacterized protein (179 aa).

The next 4 membrane-spanning stretches (helical) occupy residues 33–53, 63–83, 89–109, and 115–135; these read HIIA…VILD, VMFI…MLVL, ITAS…FVLT, and FSPF…EYFF.

Its subcellular location is the cell membrane. This is an uncharacterized protein from Bacillus subtilis (strain 168).